The following is a 241-amino-acid chain: MAPK phosphothreonine lyase (241 aa).

Residue H106 is the Proton donor of the active site. The active-site Proton acceptor is K136.

Belongs to the phosphothreonine lyase family.

The protein resides in the secreted. Secreted effector that irreversibly inactivates host MAP kinases by catalyzing the dephosphorylation of the phosphothreonine residue in the pT-X-pY motif present in MAPKs, via a beta-elimination reaction leading to a dehydrobutyrine residue. The polypeptide is MAPK phosphothreonine lyase (spvC) (Salmonella enteritidis).